Consider the following 592-residue polypeptide: Condensin-2 complex subunit H2 (592 aa).

2 disordered regions span residues 89–116 (NKKR…DGCE) and 261–285 (EAPS…PKQL). Over residues 96–108 (GSSSDGNQEQAPS) the composition is skewed to polar residues.

Belongs to the CND2 H2 (condensin-2 subunit 2) family. In terms of assembly, component of the condensin-2 complex, which contains the smc2 and smc4 heterodimer, and three non SMC subunits, ncapg2, ncaph2 and ncapd3 that probably regulate the complex.

It localises to the nucleus. In terms of biological role, regulatory subunit of the condensin-2 complex, a complex that seems to provide chromosomes with an additional level of organization and rigidity and in establishing mitotic chromosome architecture. This Danio rerio (Zebrafish) protein is Condensin-2 complex subunit H2 (ncaph2).